An 85-amino-acid chain; its full sequence is Large ribosomal subunit protein bL27 (85 aa).

The protein belongs to the bacterial ribosomal protein bL27 family.

The polypeptide is Large ribosomal subunit protein bL27 (Campylobacter concisus (strain 13826)).